A 266-amino-acid chain; its full sequence is Tryptophan synthase alpha chain (266 aa).

Catalysis depends on proton acceptor residues Glu-49 and Asp-60.

The protein belongs to the TrpA family. Tetramer of two alpha and two beta chains.

The enzyme catalyses (1S,2R)-1-C-(indol-3-yl)glycerol 3-phosphate + L-serine = D-glyceraldehyde 3-phosphate + L-tryptophan + H2O. It participates in amino-acid biosynthesis; L-tryptophan biosynthesis; L-tryptophan from chorismate: step 5/5. The alpha subunit is responsible for the aldol cleavage of indoleglycerol phosphate to indole and glyceraldehyde 3-phosphate. The sequence is that of Tryptophan synthase alpha chain from Chloroflexus aurantiacus (strain ATCC 29364 / DSM 637 / Y-400-fl).